The following is a 551-amino-acid chain: MFS efflux transporter aclA (551 aa).

Helical transmembrane passes span 26 to 46, 64 to 84, 93 to 113, 125 to 145, 154 to 174, 181 to 201, 220 to 240, and 251 to 271; these read WAVF…ITAI, VWIA…IGQI, PMII…GATS, GLGA…LVPL, IALS…GALV, WVFY…VLCL, WVGN…LVIG, and VLVP…FEAS. N-linked (GlcNAc...) asparagine glycosylation is present at N286. 6 helical membrane passes run 294–314, 327–347, 356–376, 385–405, 420–440, and 492–512; these read VLAF…TLFF, VDVI…GAIM, LHWA…TWDA, ILQC…LPAI, AYAF…AVVF, and LRTV…LVVV.

Belongs to the major facilitator superfamily.

The protein localises to the membrane. Its function is as follows. MFS efflux transporter; part of the gene cluster that mediates the biosynthesis of aspirochlorine (or antibiotic A30641), an unusual halogenated spiro compound with distinctive antifungal properties due to selective inhibition of protein biosynthesis, and which is also active against bacteria, viruses, and murine tumor cells. This is MFS efflux transporter aclA from Aspergillus oryzae (strain ATCC 42149 / RIB 40) (Yellow koji mold).